The following is a 542-amino-acid chain: Chaperonin GroEL (542 aa).

ATP-binding positions include 29–32 (TLGP), K50, 86–90 (DGTTT), G415, and D495.

Belongs to the chaperonin (HSP60) family. Forms a cylinder of 14 subunits composed of two heptameric rings stacked back-to-back. Interacts with the co-chaperonin GroES.

Its subcellular location is the cytoplasm. It carries out the reaction ATP + H2O + a folded polypeptide = ADP + phosphate + an unfolded polypeptide.. In terms of biological role, together with its co-chaperonin GroES, plays an essential role in assisting protein folding. The GroEL-GroES system forms a nano-cage that allows encapsulation of the non-native substrate proteins and provides a physical environment optimized to promote and accelerate protein folding. This is Chaperonin GroEL from Flavobacterium psychrophilum (strain ATCC 49511 / DSM 21280 / CIP 103535 / JIP02/86).